A 434-amino-acid polypeptide reads, in one-letter code: GTPase Obg (434 aa).

The Obg domain occupies 2 to 160 (PTFVDQTKIE…RVLRLELKLL (159 aa)). Residues 161–334 (ADVGLVGFPS…LMNDTATLVE (174 aa)) enclose the OBG-type G domain. GTP-binding positions include 167–174 (GFPSVGKS), 192–196 (FTTLT), 214–217 (DLPG), 284–287 (SQMD), and 315–317 (SSV). Mg(2+) contacts are provided by Ser-174 and Thr-194. Residues 356–434 (YKAPQKNEFT…IGKFVFEFVQ (79 aa)) form the OCT domain.

The protein belongs to the TRAFAC class OBG-HflX-like GTPase superfamily. OBG GTPase family. As to quaternary structure, monomer. Mg(2+) is required as a cofactor.

It localises to the cytoplasm. An essential GTPase which binds GTP, GDP and possibly (p)ppGpp with moderate affinity, with high nucleotide exchange rates and a fairly low GTP hydrolysis rate. Plays a role in control of the cell cycle, stress response, ribosome biogenesis and in those bacteria that undergo differentiation, in morphogenesis control. This Lactobacillus helveticus (strain DPC 4571) protein is GTPase Obg.